The sequence spans 3106 residues: MASSRSSSSSSEESPDSETSVSPVHLPPTPPPTSTAVLKSPSESKSSSTDPPQCTHSEDSLPSAAFYGPLDSKNPLLASCEKEIRELLGFMKKKKALATSMEQKYEFHRRCATTLFNIWTKYAPRLPSNYYNEKLLKVGDSLCQIKEYKLALLQCYGRYLQEFIADFDEHKEDVNHFKTVFFPKGFGDETARLTFHALSGKNICNYQLVCESDANLQNEESVRQCLHILSSFRLIMQVALPQEHLCWIIFNGTLYIYTICRKLMVIGQSSKALEFLLWASMCMESSVPLLSIRYLTWRATLYTAVCQCHYDCQDGIHGEAFARRALAKIDELRQLELMSSSSSLETSRKYYREATIKMAVMIFKRGVFESRRKNKNVLRPKLRLNLKEAQSLPWPRTVTERLLDELLDSTSSRFLAVLEALSDSNRRILQTGPLVTDEMELRDVVSELFMAGKELLILSNVRSNGKLDFPQTSLLEHVVEKRNALSVGASVRFAKLAFTYEEWGLFESLAGQLIHFLQKQDNPQSKKAEKDLILLLAVEPLINVKRNRGLIFPLETDKETQSIENYLKHIACHESCMRTTFTEDTFSLAAILHFCVCVPTQGVLPDKDIVVDIIGLLWQRCKLGIQRLNIPKNDFAKYSHKISTNKWVYLLWQISEVIHCYKLEDLDIVMVAEITLRLSEILESLGSPKRKFKKSADLSAKKGPDELPGTSKGVPEILPILKRAPVEQLFYAYELLDKAIIGMSWKCMLTTLSDGSSVIDHCYVKDSQDVDGDTYKPIASNSYTMDLHLELIQAQHRIAVVLLDQLEVLQAPTVSTNTPAKGWEKVKKPRSTECFTELTVMKKIKKNKLSKAIYLMQKALLLFEKDAVCETSRNLLMEANALIEKVEAEQNALYSYQKFLGSSKIKKSRIPPPPILLARTHCSVTLKPAPFISEVKASWYCILGCKADGSYGKVRLNNNHLPNSGEAIPADGRSFFEIKGLETNAQYCFAIAAYSSSGKLIGDAIGETTKPILIYPPLSAVTARMYLTQVAYQIGNYEMAKKVFSPVWDYFVASPLPDEQSVICLSNIMTITQKRLHSNILADTSSILLYLFLRNIFVMSDIKIKEENLFCDNIKGNEIFPAQQVARLVECENVLVALELSNFLNDANFALQAVTQCYGLLAPIIYHNIVLVPVIQILIKCIVVLQGIPSIIHSKKNISSFESIQHMIACCIFYMTKILRSWKEYDLAIMLINYGKKMLDITSGCRSLFGIEQEETAEEGVCSKKTSRTKKPQQVLLPEKINEQLALLETHLLKTTKQINSAELSGSEDPIFLYPIVLNWTVKGAMKEVMKFKQRPRFLEFFTQIMLKCMNDEKFHLMVEISAPVYDFLKRRNESLIGVKRIKYKETVISRRALKSPSKFKAIVIEIGKSSDLTRRRRKKKKTLKDFFYKNPSIFDMAELDRNKRTDVRKMAYRSLSDNLNPLILTYVRRKRFHQILLEELPWRAQMNLYLANAHFHLFLQKLTERTKERLGSSYSSVSFRSCDPNLFSLFHSGTVLPTAKLTVDSYNAMMDALTVSKKKKHNQTTDTEDLSVLFNSKSDDNIPKMKTQTIYESDSQLGIGVNVREKDRTLVWGLDHFMKIFLCCRRAMVLAYRGGYWTLLQNCCRVFWNFSRELQILLKQTVASCKTFPVSQDNFLCICVLPFYLGAELLIDMLIKLQSTNSIKPFEERGEFSIPSCYGNIKSDNGGSSLIFEHPLDDVNVVDLRWIHDFVLKSLEVLYQVEKWETLVSLAIQFNIISHERYTEQVTPLLVYAQRQLVQRIKELNGPELSRQACARYEAENGEKITCRNFIGKRLKIDSSTPKNLAELQGSSEPLKTLITSEQRLAKQLVSVPLDVNDTLRCFRETLEKSKYHNRSVRHSRKLLSLFLAQTQDVLQTSNQRSLKVQSLHSLGSLLLFADKKRAAFKCWSQALDDIFRKPDVLHNWKEFGTSLPGAPSSSSPPGFKDYSEEFLSKFGIWGCLQAAMITAKIAQFIKTANVKKRINCCILSALLFQSLLRTTLPHPKAERNYAQYEITQLLPGIELFSDKFRADICSVIASLYYVIRELHYAKYNLIVLPLLALYQYFVSVICQDIVRNLEARILKIEILIDLGFFSEAFYELFQIYHGKNMPCAIPAGYKATMKVKITQSFDSGKPLTHKDNMQALEELINRGLPHILVNLGYQHLLNKFNFAKSHFFISLAATINCIPDPSPKIMYYQFITERSKPTPQNLKDNENSHGQFLRLRDDYNLNTIKSILLMEAEEKVNSLLSETEHQCHRPLYLSSVLELEIMVEARLHLAAIALQRYRPAYSTAILYSTLKLLQDSKVFKKKVPEESCSPTSPETSTTESKDDSEFLDPISLNSREYFNIHLWLRCRLMLVTSFIAQIRGIGIMKESELTDCLSLIDEVCTEAKSADDTEVLAEFLMQAVVLGLQEKHFKADIIQKLKEIISLLEGSEFLSPRSWLTLAKSLILMDDLTKAEKFKKASSKENKLIFLNQAHRILIAQMLTFGETIEFPLSDSDYASPLQPLKNIYLPHVMLLAKVKLRIGHTMAKQVCSSSKKKDISKWLPVLHMFDMALKVCKATAAEEYEVEAEILFQKGRIERQMLMEEKTSIAHIESFFEAIQISLKNDQNSGLIRDSYLEIALVYFYLKKPKRKASATTLKPLPRRHSSVKDPVATQTEMYSSLAWIAIRAAAQVSESVLGINLLIGKKRAMIDKVNNITLPNIPEFATVDLLSSYTDYLLENYQVVFQTSNSLMCENDDVYDCIDGRKRNLSKVDVTWILLIRYYIHLQRINNMSKLLASATPVSGISLPDDTLLTSLYNSELILRQKEMHLFLKRFLQLYSSSCIDGFPRELLQGLENISLEKVLFESSGKVHRDSSLQSDLSGKLTVCPSYTEISSEMAVQALNKELCFQWYIPPLDKPLKDSEPMVLLLYAYNLKPLRILDIKVSTGNSLYVGTSWIPLRSVIAVHQKLSNLAQIAEISLPSVPEVTSEENIYETIEPEDKPIDTDLENMILECCSEIEALFSNNKDKDNEPPPPMTKVPFDVSLPAIFSLERLFDLANGCIVSVGSLFNWMVSIIQ.

Composition is skewed to low complexity over residues 1-24 (MASS…VSPV), 34-48 (STAV…KSSS), and 2356-2368 (ESCS…TSTT). Disordered stretches follow at residues 1-58 (MASS…THSE) and 2354-2374 (PEES…KDDS).

It belongs to the CFAP54 family. Expressed at high level in the testis and at a low level in the lung and brain.

Its subcellular location is the cytoplasm. The protein localises to the cytoskeleton. It is found in the cilium axoneme. Its function is as follows. Required for assembly and function of cilia and flagella. This Mus musculus (Mouse) protein is Cilia- and flagella-associated protein 54.